The chain runs to 152 residues: UPF0266 membrane protein YobD (152 aa).

3 helical membrane-spanning segments follow: residues 6–26, 45–65, and 67–87; these read LVLILFIAALLAFAIYDQFIM, IDSVIFVGLIVILIYNNVTNH, and ALITTWLLSALALMGFYIFWI.

The protein belongs to the UPF0266 family.

It localises to the cell inner membrane. The polypeptide is UPF0266 membrane protein YobD (Escherichia coli O45:K1 (strain S88 / ExPEC)).